Consider the following 251-residue polypeptide: HTH-type transcriptional regulator UlaR (251 aa).

The HTH deoR-type domain maps to 3 to 58 (EAQRHQILLEMLAQLGFVTVEKVVERLGISPATARRDINKLDESGKLKKVRNGAEA). A DNA-binding region (H-T-H motif) is located at residues 20 to 39 (VTVEKVVERLGISPATARRD).

Its subcellular location is the cytoplasm. In terms of biological role, represses ulaG and the ulaABCDEF operon. The sequence is that of HTH-type transcriptional regulator UlaR from Shigella dysenteriae serotype 1 (strain Sd197).